The following is a 333-amino-acid chain: DNA-directed RNA polymerase subunit alpha (333 aa).

Residues 1–227 (MRKIKVAPFM…VMNKQLSVFN (227 aa)) are alpha N-terminal domain (alpha-NTD). An alpha C-terminal domain (alpha-CTD) region spans residues 247 to 333 (ELKPFLAAVD…LVKKLEQLKA (87 aa)).

It belongs to the RNA polymerase alpha chain family. In terms of assembly, homodimer. The RNAP catalytic core consists of 2 alpha, 1 beta, 1 beta' and 1 omega subunit. When a sigma factor is associated with the core the holoenzyme is formed, which can initiate transcription.

The enzyme catalyses RNA(n) + a ribonucleoside 5'-triphosphate = RNA(n+1) + diphosphate. DNA-dependent RNA polymerase catalyzes the transcription of DNA into RNA using the four ribonucleoside triphosphates as substrates. This is DNA-directed RNA polymerase subunit alpha from Sulfurovum sp. (strain NBC37-1).